A 372-amino-acid chain; its full sequence is DNA/RNA-binding protein ALBA4 (372 aa).

This sequence belongs to the histone-like Alba family. Identified in a TARE6-associated complex consisting of over 30 proteins and including ALBA1, ALBA2 and ALBA4; the complex binds to the non-coding subtelomeric repeat region TARE6.

It is found in the nucleus. It localises to the chromosome. Its subcellular location is the telomere. The protein resides in the cytoplasm. Possesses DNA- and RNA-binding activities. Binds to DNA fragments longer than 14 base pairs with relaxed sequence specificity. Associates with the subtelomeric TARE6 repeats. Regulates the abundance of transcript sub-populations in a stage-specific manner. Regulates activation of male gametocytes. Participates in the coordination of sporozoite development in the oocyst. In Plasmodium falciparum (isolate 3D7), this protein is DNA/RNA-binding protein ALBA4.